The primary structure comprises 224 residues: MRLVIAQCTVDYVGRLTAHLPSARRLLLFKADGSVSVHADDRAYKPLNWMSPPCWVTEQDTETGVALWVVENKTGEQLRITVEDIEHDSHHELGVDPGLVKDGVEAHLQALLAEHVELLGAGYTLVRREYPTPIGPVDLLCRDELGRSVAVEIKRRGEIDGVEQLTRYLELLNRDSLLAPVAGVFAAQQIKPQARTLATDRGIRCVTLDYDQMRGMDSDEYRLF.

This sequence belongs to the NucS endonuclease family.

The protein localises to the cytoplasm. Cleaves both 3' and 5' ssDNA extremities of branched DNA structures. The polypeptide is Endonuclease NucS (Mycolicibacterium smegmatis (strain ATCC 700084 / mc(2)155) (Mycobacterium smegmatis)).